A 211-amino-acid chain; its full sequence is Urease accessory protein UreG (211 aa).

GTP is bound at residue 8–15 (GPVGSGKT).

This sequence belongs to the SIMIBI class G3E GTPase family. UreG subfamily. In terms of assembly, homodimer. UreD, UreF and UreG form a complex that acts as a GTP-hydrolysis-dependent molecular chaperone, activating the urease apoprotein by helping to assemble the nickel containing metallocenter of UreC. The UreE protein probably delivers the nickel.

The protein resides in the cytoplasm. Functionally, facilitates the functional incorporation of the urease nickel metallocenter. This process requires GTP hydrolysis, probably effectuated by UreG. This Metallosphaera sedula (strain ATCC 51363 / DSM 5348 / JCM 9185 / NBRC 15509 / TH2) protein is Urease accessory protein UreG.